Consider the following 128-residue polypeptide: Glycine cleavage system H protein (128 aa).

The 83-residue stretch at 22-104 (VATVGITEHA…YGEGWIFKMK (83 aa)) folds into the Lipoyl-binding domain. Lys-63 bears the N6-lipoyllysine mark.

This sequence belongs to the GcvH family. As to quaternary structure, the glycine cleavage system is composed of four proteins: P, T, L and H. (R)-lipoate is required as a cofactor.

In terms of biological role, the glycine cleavage system catalyzes the degradation of glycine. The H protein shuttles the methylamine group of glycine from the P protein to the T protein. This is Glycine cleavage system H protein from Methylacidiphilum infernorum (isolate V4) (Methylokorus infernorum (strain V4)).